The sequence spans 68 residues: Beta-defensin 1 (68 aa).

The first 21 residues, 1 to 21 (MRTSYLLLFTLCLLLSEIASG), serve as a signal peptide directing secretion. The propeptide occupies 22–32 (GNFLTGLGHRS). 3 disulfide bridges follow: Cys37–Cys66, Cys44–Cys59, and Cys49–Cys67.

This sequence belongs to the beta-defensin family. As to quaternary structure, monomer. Homodimer.

The protein resides in the secreted. Its subcellular location is the membrane. Its function is as follows. Has bactericidal activity. May act as a ligand for C-C chemokine receptor CCR6. Positively regulates the sperm motility and bactericidal activity in a CCR6-dependent manner. Binds to CCR6 and triggers Ca2+ mobilization in the sperm which is important for its motility. In Gorilla gorilla gorilla (Western lowland gorilla), this protein is Beta-defensin 1 (DEFB1).